The chain runs to 880 residues: Translation initiation factor IF-2 (880 aa).

The tract at residues 1 to 251 (MVDTKNPGDK…PTAKPAPAKQ (251 aa)) is disordered. Positions 58-79 (PADAPAAPAPVAAAKPAPVRAP) are enriched in low complexity. Residues 115-183 (ARIRDEEERK…KRFGEEEAKK (69 aa)) show a composition bias toward basic and acidic residues. Low complexity-rich tracts occupy residues 184 to 215 (AAAA…VAAD) and 233 to 250 (AARP…APAK). In terms of domain architecture, tr-type G spans 376–547 (PRSPVVTVMG…ALQAELLDLK (172 aa)). Residues 385-392 (GHVDHGKT) form a G1 region. 385–392 (GHVDHGKT) lines the GTP pocket. The tract at residues 410 to 414 (GITQH) is G2. The G3 stretch occupies residues 433–436 (DTPG). GTP-binding positions include 433–437 (DTPGH) and 487–490 (NKID). A G4 region spans residues 487 to 490 (NKID). The segment at 523 to 525 (SAK) is G5.

Belongs to the TRAFAC class translation factor GTPase superfamily. Classic translation factor GTPase family. IF-2 subfamily.

The protein localises to the cytoplasm. One of the essential components for the initiation of protein synthesis. Protects formylmethionyl-tRNA from spontaneous hydrolysis and promotes its binding to the 30S ribosomal subunits. Also involved in the hydrolysis of GTP during the formation of the 70S ribosomal complex. The chain is Translation initiation factor IF-2 from Rhodopseudomonas palustris (strain BisB18).